A 210-amino-acid polypeptide reads, in one-letter code: Outer-membrane lipoprotein LolB (210 aa).

The signal sequence occupies residues Met-1 to Gly-29. A lipid anchor (N-palmitoyl cysteine) is attached at Cys-30. A lipid anchor (S-diacylglycerol cysteine) is attached at Cys-30.

It belongs to the LolB family. Monomer.

The protein localises to the cell outer membrane. Its function is as follows. Plays a critical role in the incorporation of lipoproteins in the outer membrane after they are released by the LolA protein. In Coxiella burnetii (strain CbuG_Q212) (Coxiella burnetii (strain Q212)), this protein is Outer-membrane lipoprotein LolB.